Reading from the N-terminus, the 257-residue chain is Thiazole synthase (257 aa).

The Schiff-base intermediate with DXP role is filled by Lys95. 1-deoxy-D-xylulose 5-phosphate is bound by residues Gly156, 182 to 183 (AG), and 204 to 205 (NT).

The protein belongs to the ThiG family. In terms of assembly, homotetramer. Forms heterodimers with either ThiH or ThiS.

Its subcellular location is the cytoplasm. The enzyme catalyses [ThiS sulfur-carrier protein]-C-terminal-Gly-aminoethanethioate + 2-iminoacetate + 1-deoxy-D-xylulose 5-phosphate = [ThiS sulfur-carrier protein]-C-terminal Gly-Gly + 2-[(2R,5Z)-2-carboxy-4-methylthiazol-5(2H)-ylidene]ethyl phosphate + 2 H2O + H(+). The protein operates within cofactor biosynthesis; thiamine diphosphate biosynthesis. In terms of biological role, catalyzes the rearrangement of 1-deoxy-D-xylulose 5-phosphate (DXP) to produce the thiazole phosphate moiety of thiamine. Sulfur is provided by the thiocarboxylate moiety of the carrier protein ThiS. In vitro, sulfur can be provided by H(2)S. In Fusobacterium nucleatum subsp. nucleatum (strain ATCC 25586 / DSM 15643 / BCRC 10681 / CIP 101130 / JCM 8532 / KCTC 2640 / LMG 13131 / VPI 4355), this protein is Thiazole synthase.